We begin with the raw amino-acid sequence, 291 residues long: Bifunctional protein FolD (291 aa).

NADP(+)-binding positions include 166-168 (GAS) and isoleucine 232.

It belongs to the tetrahydrofolate dehydrogenase/cyclohydrolase family. Homodimer.

The enzyme catalyses (6R)-5,10-methylene-5,6,7,8-tetrahydrofolate + NADP(+) = (6R)-5,10-methenyltetrahydrofolate + NADPH. It catalyses the reaction (6R)-5,10-methenyltetrahydrofolate + H2O = (6R)-10-formyltetrahydrofolate + H(+). The protein operates within one-carbon metabolism; tetrahydrofolate interconversion. Its function is as follows. Catalyzes the oxidation of 5,10-methylenetetrahydrofolate to 5,10-methenyltetrahydrofolate and then the hydrolysis of 5,10-methenyltetrahydrofolate to 10-formyltetrahydrofolate. The chain is Bifunctional protein FolD from Photorhabdus laumondii subsp. laumondii (strain DSM 15139 / CIP 105565 / TT01) (Photorhabdus luminescens subsp. laumondii).